Reading from the N-terminus, the 325-residue chain is MGLTEQKQKHMEQLSDKNGIISALAFDQRGALKRLMAKYQSEEPTVSQIEALKVLVAEELTPYASSMLLDPEYGLPATKVLDDNAGLLLAYEKTGYDTSSTKRLPDCLDIWSAKRIKEEGADAVKFLLYYDVDSSDEVNEEKEAYIERIGSECVAEDIPFFLEILSYDEKITDSSGIEYAKIKPRKVIEAMKVFSNPRFNIDVLKVEVPVNMDYVEGFAQGETAYNKATAAAYFREQDQATLLPYIFLSAGVPAQLFQETLVFAKEAGAKFNGVLCGRATWAGSVKEYVEKGEAGARQWLRTIGFQNIDELNKILQKTATSWKER.

This sequence belongs to the aldolase LacD family.

It carries out the reaction D-tagatofuranose 1,6-bisphosphate = D-glyceraldehyde 3-phosphate + dihydroxyacetone phosphate. It participates in carbohydrate metabolism; D-tagatose 6-phosphate degradation; D-glyceraldehyde 3-phosphate and glycerone phosphate from D-tagatose 6-phosphate: step 2/2. This is Tagatose 1,6-diphosphate aldolase 1 from Streptococcus agalactiae serotype III (strain NEM316).